A 97-amino-acid chain; its full sequence is Large ribosomal subunit protein bL27 (97 aa).

Residues 1 to 12 constitute a propeptide that is removed on maturation; the sequence is MLNLNLANLQFM. The segment at 15–37 is disordered; the sequence is KKGGGSTSNGRDSQAKRLGAKAA.

Belongs to the bacterial ribosomal protein bL27 family. Post-translationally, the N-terminus is cleaved by ribosomal processing cysteine protease Prp.

This Streptococcus suis (strain 98HAH33) protein is Large ribosomal subunit protein bL27.